We begin with the raw amino-acid sequence, 234 residues long: 7-cyano-7-deazaguanine synthase (234 aa).

13 to 23 contributes to the ATP binding site; that stretch reads LSGGQDSTTCL. Zn(2+) contacts are provided by Cys193, Cys201, Cys204, and Cys207.

This sequence belongs to the QueC family. The cofactor is Zn(2+).

It catalyses the reaction 7-carboxy-7-deazaguanine + NH4(+) + ATP = 7-cyano-7-deazaguanine + ADP + phosphate + H2O + H(+). It functions in the pathway purine metabolism; 7-cyano-7-deazaguanine biosynthesis. Its function is as follows. Catalyzes the ATP-dependent conversion of 7-carboxy-7-deazaguanine (CDG) to 7-cyano-7-deazaguanine (preQ(0)). The sequence is that of 7-cyano-7-deazaguanine synthase from Chromobacterium violaceum (strain ATCC 12472 / DSM 30191 / JCM 1249 / CCUG 213 / NBRC 12614 / NCIMB 9131 / NCTC 9757 / MK).